A 212-amino-acid polypeptide reads, in one-letter code: Thaumatin-like protein 1b (212 aa).

7 disulfide bridges follow: C47–C57, C62–C69, C117–C200, C122–C183, C130–C146, C150–C159, and C160–C170.

This sequence belongs to the thaumatin family.

It localises to the secreted. This Malus domestica (Apple) protein is Thaumatin-like protein 1b.